The sequence spans 163 residues: Nucleotide-binding protein DvMF_3058 (163 aa).

This sequence belongs to the YajQ family.

In terms of biological role, nucleotide-binding protein. The protein is Nucleotide-binding protein DvMF_3058 of Nitratidesulfovibrio vulgaris (strain DSM 19637 / Miyazaki F) (Desulfovibrio vulgaris).